Reading from the N-terminus, the 155-residue chain is Interleukin-2 (155 aa).

Positions 1 to 20 (MYKMQLLSCIALMLVLVANS) are cleaved as a signal peptide. The O-linked (GalNAc...) threonine glycan is linked to Thr24. Cys79 and Cys127 are joined by a disulfide. N-linked (GlcNAc...) asparagine glycosylation is present at Asn112.

It belongs to the IL-2 family.

The protein localises to the secreted. Its function is as follows. Cytokine produced by activated CD4-positive helper T-cells and to a lesser extend activated CD8-positive T-cells and natural killer (NK) cells that plays pivotal roles in the immune response and tolerance. Binds to a receptor complex composed of either the high-affinity trimeric IL-2R (IL2RA/CD25, IL2RB/CD122 and IL2RG/CD132) or the low-affinity dimeric IL-2R (IL2RB and IL2RG). Interaction with the receptor leads to oligomerization and conformation changes in the IL-2R subunits resulting in downstream signaling starting with phosphorylation of JAK1 and JAK3. In turn, JAK1 and JAK3 phosphorylate the receptor to form a docking site leading to the phosphorylation of several substrates including STAT5. This process leads to activation of several pathways including STAT, phosphoinositide-3-kinase/PI3K and mitogen-activated protein kinase/MAPK pathways. Functions as a T-cell growth factor and can increase NK-cell cytolytic activity as well. Promotes strong proliferation of activated B-cells and subsequently immunoglobulin production. Plays a pivotal role in regulating the adaptive immune system by controlling the survival and proliferation of regulatory T-cells, which are required for the maintenance of immune tolerance. Moreover, participates in the differentiation and homeostasis of effector T-cell subsets, including Th1, Th2, Th17 as well as memory CD8-positive T-cells. The sequence is that of Interleukin-2 (IL2) from Vulpes vulpes (Red fox).